The sequence spans 497 residues: Probable cytosol aminopeptidase (497 aa).

2 residues coordinate Mn(2+): Lys263 and Asp268. Lys275 is an active-site residue. Asp286, Asp345, and Glu347 together coordinate Mn(2+). Arg349 is a catalytic residue.

Belongs to the peptidase M17 family. Requires Mn(2+) as cofactor.

It localises to the cytoplasm. The catalysed reaction is Release of an N-terminal amino acid, Xaa-|-Yaa-, in which Xaa is preferably Leu, but may be other amino acids including Pro although not Arg or Lys, and Yaa may be Pro. Amino acid amides and methyl esters are also readily hydrolyzed, but rates on arylamides are exceedingly low.. The enzyme catalyses Release of an N-terminal amino acid, preferentially leucine, but not glutamic or aspartic acids.. Presumably involved in the processing and regular turnover of intracellular proteins. Catalyzes the removal of unsubstituted N-terminal amino acids from various peptides. The protein is Probable cytosol aminopeptidase of Sinorhizobium medicae (strain WSM419) (Ensifer medicae).